The sequence spans 511 residues: Cytochrome P450 4B1 (511 aa).

Residue glutamate 315 coordinates heme. Serine 436 is subject to Phosphoserine. Cysteine 453 lines the heme pocket.

Belongs to the cytochrome P450 family. It depends on heme as a cofactor. As to expression, detected in the liver and lung (at protein level).

Its subcellular location is the endoplasmic reticulum membrane. The protein localises to the microsome membrane. The catalysed reaction is an organic molecule + reduced [NADPH--hemoprotein reductase] + O2 = an alcohol + oxidized [NADPH--hemoprotein reductase] + H2O + H(+). Its function is as follows. Cytochromes P450 are a group of heme-thiolate monooxygenases. In liver microsomes, this enzyme is involved in an NADPH-dependent electron transport pathway. It oxidizes a variety of structurally unrelated compounds, including steroids, fatty acids, and xenobiotics. The protein is Cytochrome P450 4B1 (CYP4B1) of Homo sapiens (Human).